The primary structure comprises 215 residues: 3-demethoxyubiquinol 3-hydroxylase (215 aa).

Residues Glu-64, Glu-94, His-97, Glu-146, Glu-178, and His-181 each coordinate Fe cation.

This sequence belongs to the COQ7 family. It depends on Fe cation as a cofactor.

Its subcellular location is the cell membrane. The catalysed reaction is a 5-methoxy-2-methyl-3-(all-trans-polyprenyl)benzene-1,4-diol + AH2 + O2 = a 3-demethylubiquinol + A + H2O. The protein operates within cofactor biosynthesis; ubiquinone biosynthesis. Functionally, catalyzes the hydroxylation of 2-nonaprenyl-3-methyl-6-methoxy-1,4-benzoquinol during ubiquinone biosynthesis. This Pseudomonas paraeruginosa (strain DSM 24068 / PA7) (Pseudomonas aeruginosa (strain PA7)) protein is 3-demethoxyubiquinol 3-hydroxylase.